The sequence spans 402 residues: Putative F-box/kelch-repeat protein At1g61540 (402 aa).

The 47-residue stretch at 24–70 (PISIMSLPYDLLLNCFSLVSRLYYPTLSLVSKTFRSIITSRELYEIR) folds into the F-box domain. Kelch repeat units follow at residues 135–189 (NIYK…CEVD), 191–240 (KIYI…EVKS), and 246–293 (KIYM…VVDN).

This chain is Putative F-box/kelch-repeat protein At1g61540, found in Arabidopsis thaliana (Mouse-ear cress).